A 217-amino-acid polypeptide reads, in one-letter code: Cytidylate kinase (217 aa).

9 to 17 lines the ATP pocket; the sequence is GPSSSGKSS.

It belongs to the cytidylate kinase family. Type 1 subfamily.

Its subcellular location is the cytoplasm. It carries out the reaction CMP + ATP = CDP + ADP. It catalyses the reaction dCMP + ATP = dCDP + ADP. This is Cytidylate kinase from Mycoplasma genitalium (strain ATCC 33530 / DSM 19775 / NCTC 10195 / G37) (Mycoplasmoides genitalium).